A 299-amino-acid chain; its full sequence is Glutamyl-Q tRNA(Asp) synthetase (299 aa).

L-glutamate contacts are provided by residues 9–13 (RFAPS) and Glu45. Positions 12-22 (PSPTGPLHFGS) match the 'HIGH' region motif. Cys101, Cys103, and Cys118 together coordinate Zn(2+). Tyr170 and Arg188 together coordinate L-glutamate. Residues 226–230 (KLSKS) carry the 'KMSKS' region motif. Lys229 is a binding site for ATP. The segment at 279–299 (QLLPRQRQRDRATCAYERQRD) is disordered. The span at 285 to 299 (RQRDRATCAYERQRD) shows a compositional bias: basic and acidic residues.

This sequence belongs to the class-I aminoacyl-tRNA synthetase family. GluQ subfamily. Requires Zn(2+) as cofactor.

Its function is as follows. Catalyzes the tRNA-independent activation of glutamate in presence of ATP and the subsequent transfer of glutamate onto a tRNA(Asp). Glutamate is transferred on the 2-amino-5-(4,5-dihydroxy-2-cyclopenten-1-yl) moiety of the queuosine in the wobble position of the QUC anticodon. The protein is Glutamyl-Q tRNA(Asp) synthetase of Xanthomonas oryzae pv. oryzae (strain KACC10331 / KXO85).